The primary structure comprises 421 residues: MSNITINKILARQILDSRGYPTIEAEVILSNNTKAKACVPSGASVGKFEAVELRDNDKNYYNGYGVTKAVNIINSEIAPQIIGMNTLNQEKIDNTLIKIDGTDNKSRIGANSTLAVSLAIAKAAASTLNIPLYQYIGGINAKVLPTPLINVINGGMHADNNLDFQEFMIIPNGANKFEDAMRMSAEVFFKLKQILKSKQYNTSVGDEGGFAPNIKTNNEVFEIIIDAIEKSGYKMYKDFSLGLDVAASTFYKDQKYKFADYEFNTQELVEYYKNITSQYPIISLEDPIAEEDTNGWKLITQELGNKIQIVGDDLFVTNCKLIQNGIQNNLANAVLIKPNQIGTLTETFNAIRLAQKNNYNTIISHRSGETEDTTISHIAVAANCGQIKTGSLSRSERLAKYNELLYIEKQLDISAIYYGAL.

Glutamine 165 provides a ligand contact to (2R)-2-phosphoglycerate. Glutamate 207 functions as the Proton donor in the catalytic mechanism. Mg(2+)-binding residues include aspartate 244, glutamate 285, and aspartate 312. (2R)-2-phosphoglycerate contacts are provided by lysine 337, arginine 366, serine 367, and lysine 388. Lysine 337 (proton acceptor) is an active-site residue.

This sequence belongs to the enolase family. Mg(2+) serves as cofactor.

It is found in the cytoplasm. The protein localises to the secreted. The protein resides in the cell surface. The enzyme catalyses (2R)-2-phosphoglycerate = phosphoenolpyruvate + H2O. The protein operates within carbohydrate degradation; glycolysis; pyruvate from D-glyceraldehyde 3-phosphate: step 4/5. Its function is as follows. Catalyzes the reversible conversion of 2-phosphoglycerate (2-PG) into phosphoenolpyruvate (PEP). It is essential for the degradation of carbohydrates via glycolysis. This chain is Enolase, found in Ehrlichia canis (strain Jake).